The chain runs to 216 residues: Probable GTP-binding protein EngB (216 aa).

In terms of domain architecture, EngB-type G spans 37–214 (GSVEIAFAGR…RAAMIRLLDE (178 aa)). GTP is bound by residues 45-52 (GRSNVGKS), 72-76 (GRTQE), 92-95 (DMPG), 159-162 (TKAD), and 193-195 (TSS). Positions 52 and 74 each coordinate Mg(2+).

It belongs to the TRAFAC class TrmE-Era-EngA-EngB-Septin-like GTPase superfamily. EngB GTPase family. Requires Mg(2+) as cofactor.

Its function is as follows. Necessary for normal cell division and for the maintenance of normal septation. The protein is Probable GTP-binding protein EngB of Rhodopseudomonas palustris (strain TIE-1).